The chain runs to 158 residues: NAD(P)H-quinone oxidoreductase subunit J, chloroplastic (158 aa).

This sequence belongs to the complex I 30 kDa subunit family. As to quaternary structure, NDH is composed of at least 16 different subunits, 5 of which are encoded in the nucleus.

It is found in the plastid. The protein localises to the chloroplast thylakoid membrane. The enzyme catalyses a plastoquinone + NADH + (n+1) H(+)(in) = a plastoquinol + NAD(+) + n H(+)(out). It carries out the reaction a plastoquinone + NADPH + (n+1) H(+)(in) = a plastoquinol + NADP(+) + n H(+)(out). In terms of biological role, NDH shuttles electrons from NAD(P)H:plastoquinone, via FMN and iron-sulfur (Fe-S) centers, to quinones in the photosynthetic chain and possibly in a chloroplast respiratory chain. The immediate electron acceptor for the enzyme in this species is believed to be plastoquinone. Couples the redox reaction to proton translocation, and thus conserves the redox energy in a proton gradient. In Pelargonium hortorum (Common geranium), this protein is NAD(P)H-quinone oxidoreductase subunit J, chloroplastic.